Here is a 910-residue protein sequence, read N- to C-terminus: Leucine--tRNA ligase (910 aa).

The 'HIGH' region signature appears at 42-52 (PYPSGKLHMGH). A 'KMSKS' region motif is present at residues 658 to 662 (TMSKS). Lys661 provides a ligand contact to ATP.

It belongs to the class-I aminoacyl-tRNA synthetase family.

It is found in the cytoplasm. The enzyme catalyses tRNA(Leu) + L-leucine + ATP = L-leucyl-tRNA(Leu) + AMP + diphosphate. The chain is Leucine--tRNA ligase from Acidovorax ebreus (strain TPSY) (Diaphorobacter sp. (strain TPSY)).